A 428-amino-acid chain; its full sequence is Adenylosuccinate synthetase (428 aa).

Residues 12-18 and 40-42 contribute to the GTP site; these read GDEGKGK and GHT. Asp13 serves as the catalytic Proton acceptor. Mg(2+) is bound by residues Asp13 and Gly40. IMP is bound by residues 13 to 16, 38 to 41, Thr131, Arg145, Gln226, Thr241, and Arg305; these read DEGK and NAGH. Catalysis depends on His41, which acts as the Proton donor. 301-307 is a binding site for substrate; it reads ATTGRKR. GTP contacts are provided by residues Arg307, 333-335, and 415-417; these read KLD and SVG.

Belongs to the adenylosuccinate synthetase family. Homodimer. Requires Mg(2+) as cofactor.

Its subcellular location is the cytoplasm. The enzyme catalyses IMP + L-aspartate + GTP = N(6)-(1,2-dicarboxyethyl)-AMP + GDP + phosphate + 2 H(+). It participates in purine metabolism; AMP biosynthesis via de novo pathway; AMP from IMP: step 1/2. Its function is as follows. Plays an important role in the de novo pathway of purine nucleotide biosynthesis. Catalyzes the first committed step in the biosynthesis of AMP from IMP. The chain is Adenylosuccinate synthetase from Nitratidesulfovibrio vulgaris (strain DSM 19637 / Miyazaki F) (Desulfovibrio vulgaris).